We begin with the raw amino-acid sequence, 247 residues long: Phycobilisome rod-core linker polypeptide CpcG2 (247 aa).

A PBS-linker domain is found at 11-189 (SSQNQRVPGY…YWRDKLESER (179 aa)). Residues 223 to 247 (PDTTRNTTPTGIPISVNPSANFPVR) form a disordered region.

Belongs to the phycobilisome linker protein family. Part of the phycobilisome, a hemidiscoidal structure that is composed of two distinct substructures: a core complex and a number of rods radiating from the core.

The protein localises to the cellular thylakoid membrane. In terms of biological role, rod-core linker protein required for attachment of phycocyanin to allophycocyanin in cores of phycobilisomes. Its function is as follows. Linker polypeptides determine the state of aggregation and the location of the disk-shaped phycobiliprotein units within the phycobilisome and modulate their spectroscopic properties in order to mediate a directed and optimal energy transfer. This Nostoc sp. (strain PCC 7120 / SAG 25.82 / UTEX 2576) protein is Phycobilisome rod-core linker polypeptide CpcG2.